The sequence spans 215 residues: Probable phosphoglycerate mutase GpmB (215 aa).

Residues 8-15 (RHGETQWN), 21-22 (QG), R58, R60, 82-85 (ELDM), 104-105 (RR), and 151-152 (GI) each bind substrate. H9 (tele-phosphohistidine intermediate) is an active-site residue. Residue E82 is the Proton donor/acceptor of the active site.

It belongs to the phosphoglycerate mutase family. GpmB subfamily.

The enzyme catalyses (2R)-2-phosphoglycerate = (2R)-3-phosphoglycerate. Its pathway is carbohydrate degradation; glycolysis; pyruvate from D-glyceraldehyde 3-phosphate: step 3/5. This Citrobacter koseri (strain ATCC BAA-895 / CDC 4225-83 / SGSC4696) protein is Probable phosphoglycerate mutase GpmB.